Consider the following 397-residue polypeptide: Growth-regulating factor 5 (397 aa).

The 36-residue stretch at 16–51 (PFTPTQWEELEHQALIYKYMVSGVPVPPELIFSIRR) folds into the QLQ domain. 2 short sequence motifs (bipartite nuclear localization signal) span residues 78-96 (RKPD…KKWR) and 114-121 (RGRNRARK). A WRC domain is found at 81–125 (DPEPGRCRRTDGKKWRCSREAYPDSKYCEKHMHRGRNRARKSLDQ). Disordered stretches follow at residues 108 to 172 (CEKH…SMDA), 197 to 217 (LDYP…HHAS), 288 to 320 (PYHH…DHDH), and 340 to 397 (VLAN…DTGS). A compositionally biased stretch (basic residues) spans 111-120 (HMHRGRNRAR). The segment covering 128 to 172 (TTTTPLTSPSLSFTNNNNPSPTLSSSSSSNSSSTTYSASSSSMDA) has biased composition (low complexity). Residues 288 to 298 (PYHHCSTDHNK) show a composition bias toward basic and acidic residues.

This sequence belongs to the GRF family. In terms of assembly, interacts with GIF1. As to expression, strongly expressed in actively growing and developing tissues, such as roots, upper stems, and shoot tips containing the shoot apical meristem (SAM) and flower buds. Also expressed in mature flowers, but weakly expressed in mature stems and leaves.

It localises to the nucleus. Functionally, transcription activator that plays a role in the regulation of cell expansion in leaf and cotyledons tissues. Acts together with GIF1 for the development of appropriate leaf size and shape through the promotion and/or maintenance of cell proliferation activity in leaf primordia. This chain is Growth-regulating factor 5 (GRF5), found in Arabidopsis thaliana (Mouse-ear cress).